We begin with the raw amino-acid sequence, 159 residues long: SsrA-binding protein (159 aa).

The tract at residues 131 to 159 (KGKKLHDKRESEKERDWNRQKSRLLKDNG) is disordered. The segment covering 137 to 159 (DKRESEKERDWNRQKSRLLKDNG) has biased composition (basic and acidic residues).

This sequence belongs to the SmpB family.

It is found in the cytoplasm. Its function is as follows. Required for rescue of stalled ribosomes mediated by trans-translation. Binds to transfer-messenger RNA (tmRNA), required for stable association of tmRNA with ribosomes. tmRNA and SmpB together mimic tRNA shape, replacing the anticodon stem-loop with SmpB. tmRNA is encoded by the ssrA gene; the 2 termini fold to resemble tRNA(Ala) and it encodes a 'tag peptide', a short internal open reading frame. During trans-translation Ala-aminoacylated tmRNA acts like a tRNA, entering the A-site of stalled ribosomes, displacing the stalled mRNA. The ribosome then switches to translate the ORF on the tmRNA; the nascent peptide is terminated with the 'tag peptide' encoded by the tmRNA and targeted for degradation. The ribosome is freed to recommence translation, which seems to be the essential function of trans-translation. The sequence is that of SsrA-binding protein from Rhizobium etli (strain CIAT 652).